The primary structure comprises 1849 residues: Brefeldin A-inhibited guanine nucleotide-exchange protein 1 (1849 aa).

The DCB; DCB:DCB and DCB:HUS domain interaction stretch occupies residues 2-224; that stretch reads YEGKKTKNMF…QEAKQMEKER (223 aa). Over residues 46 to 58 the composition is skewed to basic and acidic residues; the sequence is AETEKQSPPHGEA. Disordered regions lie at residues 46 to 65, 216 to 301, and 350 to 413; these read AETE…SSTL, EAKQ…ADQA, and INVS…SPGA. Residues S52, S286, S289, and S290 each carry the phosphoserine modification. Composition is skewed to polar residues over residues 350–360 and 394–409; these read INVSADGNNGT and SVSS…SSGP. Phosphoserine occurs at positions 397 and 410. Residues 557-577 form an HUS; DCB:HUS domain interaction region; it reads ADAQSVVDIYVNYDCDLNAAN. Positions 634–687 are disordered; that stretch reads PNSQTTLGQEKPSEQETSEMKHPETINRYGSLNSLESTSSSGIGSYSTQMSGTD. The segment covering 644–658 has biased composition (basic and acidic residues); it reads KPSEQETSEMKHPET. Residues 664–684 are compositionally biased toward low complexity; sequence SLNSLESTSSSGIGSYSTQMS. An SEC7 domain is found at 709 to 840; the sequence is FTKKPKRGIQ…IIMLTTDLHS (132 aa). Positions 711 to 715 match the Nuclear localization signal (NLS) motif; the sequence is KKPKR. Phosphoserine occurs at positions 1079, 1566, and 1569.

Homodimer. Interacts with ARFGEF2/BIG2; both proteins are probably part of the same or very similar macromolecular complexes. Interacts with FKBP2. Interacts with MYO9B. Interacts with PRKAR1A and PRKAR2A. Interacts with PPP1CC. Interacts with NCL, FBL, NUP62 and U3 small nucleolar RNA. Interacts with DPY30. Interacts with PDE3A. Interacts with KANK1. Interacts with TBC1D22A and TBC1D22B. Phosphorylated. In vitro phosphorylated by PKA reducing its GEF activity and dephosphorylated by phosphatase PP1. As to expression, abundantly expressed in kidney, somewhat less abundant in lung, spleen, and brain, and still less abundant in heart.

It localises to the cytoplasm. It is found in the perinuclear region. The protein resides in the golgi apparatus. The protein localises to the trans-Golgi network. Its subcellular location is the nucleus. It localises to the nucleolus. It is found in the nucleus matrix. The protein resides in the membrane. Inhibited by brefeldin A. Its function is as follows. Promotes guanine-nucleotide exchange on ARF1 and ARF3. Promotes the activation of ARF1/ARF3 through replacement of GDP with GTP. Involved in vesicular trafficking. Required for the maintenance of Golgi structure; the function may be independent of its GEF activity. Required for the maturation of integrin beta-1 in the Golgi. Involved in the establishment and persistence of cell polarity during directed cell movement in wound healing. Proposed to act as A kinase-anchoring protein (AKAP) and may mediate crosstalk between Arf and PKA pathways. Inhibits GAP activity of MYO9B probably through competitive RhoA binding. The function in the nucleus remains to be determined. This is Brefeldin A-inhibited guanine nucleotide-exchange protein 1 (ARFGEF1) from Bos taurus (Bovine).